The primary structure comprises 432 residues: Glutamate-1-semialdehyde 2,1-aminomutase (432 aa).

Lys-270 carries the post-translational modification N6-(pyridoxal phosphate)lysine.

The protein belongs to the class-III pyridoxal-phosphate-dependent aminotransferase family. HemL subfamily. In terms of assembly, homodimer. The cofactor is pyridoxal 5'-phosphate.

Its subcellular location is the cytoplasm. The catalysed reaction is (S)-4-amino-5-oxopentanoate = 5-aminolevulinate. It functions in the pathway porphyrin-containing compound metabolism; protoporphyrin-IX biosynthesis; 5-aminolevulinate from L-glutamyl-tRNA(Glu): step 2/2. This is Glutamate-1-semialdehyde 2,1-aminomutase from Acinetobacter baumannii (strain ATCC 17978 / DSM 105126 / CIP 53.77 / LMG 1025 / NCDC KC755 / 5377).